The primary structure comprises 202 residues: Adenosylcobalamin/alpha-ribazole phosphatase (202 aa).

His-8 functions as the Tele-phosphohistidine intermediate in the catalytic mechanism. Glu-81 (proton donor/acceptor) is an active-site residue.

The protein belongs to the phosphoglycerate mutase family.

The enzyme catalyses adenosylcob(III)alamin 5'-phosphate + H2O = adenosylcob(III)alamin + phosphate. It catalyses the reaction alpha-ribazole 5'-phosphate + H2O = alpha-ribazole + phosphate. The protein operates within nucleoside biosynthesis; alpha-ribazole biosynthesis; alpha-ribazole from 5,6-dimethylbenzimidazole: step 2/2. Functionally, catalyzes the conversion of adenosylcobalamin 5'-phosphate to adenosylcobalamin (vitamin B12); involved in the assembly of the nucleotide loop of cobalamin. Also catalyzes the hydrolysis of the phospho group from alpha-ribazole 5'-phosphate to form alpha-ribazole. The sequence is that of Adenosylcobalamin/alpha-ribazole phosphatase (cobC) from Salmonella typhi.